The sequence spans 144 residues: Na(+)/H(+) antiporter subunit B (144 aa).

4 consecutive transmembrane segments (helical) span residues 9 to 31 (VLLHTLTRVVTFIILAFSVYLFF), 41 to 58 (FIGGLMTASALLLMYLGF), 75 to 97 (IAFGLLIAIFTGFGGLLVGDPYL), and 117 to 139 (ALPFDLGIYLVVIGIALTIILTI).

This sequence belongs to the CPA3 antiporters (TC 2.A.63) subunit B family. In terms of assembly, forms a heterooligomeric complex that consists of seven subunits: MrpA, MrpB, MrpC, MrpD, MrpE, MrpF and MrpG.

It is found in the cell membrane. Mnh complex is a Na(+)Li(+)/H(+) antiporter involved in Na(+) and/or Li(+) excretion and Na(+) resistance. Na(+)/H(+) antiport consumes a transmembrane electrical potential, and is thus inferred to be electrogenic. Does not transport K(+), Ca(2+) or Mg(2+). The sequence is that of Na(+)/H(+) antiporter subunit B (mrpB) from Alkalihalophilus pseudofirmus (strain ATCC BAA-2126 / JCM 17055 / OF4) (Bacillus pseudofirmus).